We begin with the raw amino-acid sequence, 385 residues long: MHFIDQAEIEVQAGNGGDGIVAFRREKYVPAGGPSGGNGGRGGSVILVADPGLQTLLDFRFQPVIKAEHGAKGGPNHRSGASGADRLVRVPCGTMVFDTETGELLGDLVQPGDRLLVARGGKGGLGNAHFLSNHNRAPRQFTRGQPGERRRLRLELKLIAEVGIVGMPNAGKSTLISVVSSARPKIADYPFTTLQPNLGVVPHPAGDGVVFADIPGLIEGAHRGVGLGHDFLRHVERTRVLIHLVDGTAADPVRDYQIIQQELRAYGHGLSDKPQIVVLNKIDALEPQEVSERTQRLSMAAGAPVSAISAVARQGLEPLLQRVWQCLGRDPDLHRPAAASKIQPVRGQENLRIGVPLPSQNSEMSGYVYLGGGSAPRFAPDQVGH.

Residues 1 to 159 form the Obg domain; that stretch reads MHFIDQAEIE…RRLRLELKLI (159 aa). Residues 160–328 enclose the OBG-type G domain; that stretch reads AEVGIVGMPN…LLQRVWQCLG (169 aa). GTP-binding positions include 166–173, 191–195, 213–216, 280–283, and 309–311; these read GMPNAGKS, FTTLQ, DIPG, NKID, and SAV. Mg(2+)-binding residues include Ser173 and Thr193.

It belongs to the TRAFAC class OBG-HflX-like GTPase superfamily. OBG GTPase family. Monomer. Requires Mg(2+) as cofactor.

It localises to the cytoplasm. An essential GTPase which binds GTP, GDP and possibly (p)ppGpp with moderate affinity, with high nucleotide exchange rates and a fairly low GTP hydrolysis rate. Plays a role in control of the cell cycle, stress response, ribosome biogenesis and in those bacteria that undergo differentiation, in morphogenesis control. In Synechococcus sp. (strain JA-3-3Ab) (Cyanobacteria bacterium Yellowstone A-Prime), this protein is GTPase Obg.